Here is a 57-residue protein sequence, read N- to C-terminus: Ribosome modulation factor 1 (57 aa).

Residues 1–14 (MKRQKRDRQSRAHT) are compositionally biased toward basic residues. The tract at residues 1–24 (MKRQKRDRQSRAHTRGYQAGISGR) is disordered.

Belongs to the ribosome modulation factor family.

It is found in the cytoplasm. During stationary phase, converts 70S ribosomes to an inactive dimeric form (100S ribosomes). In Colwellia psychrerythraea (strain 34H / ATCC BAA-681) (Vibrio psychroerythus), this protein is Ribosome modulation factor 1.